Consider the following 293-residue polypeptide: 4-hydroxy-tetrahydrodipicolinate synthase (293 aa).

Residue threonine 47 coordinates pyruvate. The active-site Proton donor/acceptor is tyrosine 136. The Schiff-base intermediate with substrate role is filled by lysine 164. Position 206 (isoleucine 206) interacts with pyruvate.

Belongs to the DapA family. As to quaternary structure, homotetramer; dimer of dimers.

The protein localises to the cytoplasm. It carries out the reaction L-aspartate 4-semialdehyde + pyruvate = (2S,4S)-4-hydroxy-2,3,4,5-tetrahydrodipicolinate + H2O + H(+). The protein operates within amino-acid biosynthesis; L-lysine biosynthesis via DAP pathway; (S)-tetrahydrodipicolinate from L-aspartate: step 3/4. Functionally, catalyzes the condensation of (S)-aspartate-beta-semialdehyde [(S)-ASA] and pyruvate to 4-hydroxy-tetrahydrodipicolinate (HTPA). This Listeria innocua serovar 6a (strain ATCC BAA-680 / CLIP 11262) protein is 4-hydroxy-tetrahydrodipicolinate synthase.